The sequence spans 306 residues: MLNYVIKRLLGLIPTLFIVSVLVFLFVHMLPGDPARLIAGPEADAQVIELVRQQLGLDQPLYHQFWHYISNAVQGDFGLSMVSRRPVADEIASRFMPTLWLTITSMVWAVIFGMAAGIIAAVWRNRWPDRLSMTIAVSGISFPAFALGMFLIQVFSVELGWLPTVGADSWQHYILPSLTLGAAVAAVMARFTRASFVDVLSEDYMRTARAKGVSETWVVLKHGLRNAMIPVVTMMGLQFGFLLGGSIVVEKVFNWPGLGRLLVDSVEMRDYPVIQAEILLFSLEFILINLVVDVLYAAINPAIRYK.

Over 1–8 (MLNYVIKR) the chain is Cytoplasmic. The helical transmembrane segment at 9-29 (LLGLIPTLFIVSVLVFLFVHM) threads the bilayer. The Periplasmic portion of the chain corresponds to 30–102 (LPGDPARLIA…SRFMPTLWLT (73 aa)). Positions 95–292 (FMPTLWLTIT…LEFILINLVV (198 aa)) constitute an ABC transmembrane type-1 domain. The helical transmembrane segment at 103 to 123 (ITSMVWAVIFGMAAGIIAAVW) threads the bilayer. Topologically, residues 124 to 134 (RNRWPDRLSMT) are cytoplasmic. Residues 135–155 (IAVSGISFPAFALGMFLIQVF) traverse the membrane as a helical segment. Over 156–168 (SVELGWLPTVGAD) the chain is Periplasmic. Residues 169–189 (SWQHYILPSLTLGAAVAAVMA) form a helical membrane-spanning segment. Residues 190-228 (RFTRASFVDVLSEDYMRTARAKGVSETWVVLKHGLRNAM) lie on the Cytoplasmic side of the membrane. Residues 229–249 (IPVVTMMGLQFGFLLGGSIVV) traverse the membrane as a helical segment. The Periplasmic segment spans residues 250–277 (EKVFNWPGLGRLLVDSVEMRDYPVIQAE). The helical transmembrane segment at 278–298 (ILLFSLEFILINLVVDVLYAA) threads the bilayer. At 299 to 306 (INPAIRYK) the chain is on the cytoplasmic side.

Belongs to the binding-protein-dependent transport system permease family. As to quaternary structure, the complex is composed of two ATP-binding proteins (GsiA), two transmembrane proteins (GsiC and GsiD) and a solute-binding protein (GsiB).

The protein localises to the cell inner membrane. In terms of biological role, part of the ABC transporter complex GsiABCD involved in glutathione import. Probably responsible for the translocation of the substrate across the membrane. The sequence is that of Glutathione transport system permease protein GsiC from Shigella flexneri serotype 5b (strain 8401).